The primary structure comprises 83 residues: Large ribosomal subunit protein uL23 (83 aa).

The protein belongs to the universal ribosomal protein uL23 family. As to quaternary structure, part of the 50S ribosomal subunit. Contacts protein L29.

Functionally, binds to 23S rRNA. One of the proteins that surrounds the polypeptide exit tunnel on the outside of the ribosome. This is Large ribosomal subunit protein uL23 from Thermoplasma volcanium (strain ATCC 51530 / DSM 4299 / JCM 9571 / NBRC 15438 / GSS1).